Reading from the N-terminus, the 1360-residue chain is MKAAEIKRDLTNIQKSMSEINDLAKERITGGPGSISTTSASAITAPSTMSQTTTSRLAPKLTSAHPSIDDLRGLSRQDKITQLQKKIRASFENLVDHDDSNVIVTLPDDDDCPHNHFGSGLNLTHPTAAQLSASGLSGSSKTIDTIKFQEKSMKTESKTKVVTDGFSSEQATSNSAEMKRLQAGDIDYQESKGASAMRNRLEVDGVKTEENAAVIKEALSLRTGDITQQASNNVAASSITVQSENFSADKKAISQSQQSQTMTSNGIISQEKHVSSASQANYSMSHKGVSSTGSSMITSSSQMSAMNGQMLKLADLKLDDLKSLTAGSGQQEIEQTINKYSNMLTSIVSSLQEDERGGSAITVHDVGGKKSQYLEKINEVIRRAWAVPTHGHELGYSLCNSLRQSGGLDLLMKNCVKPDLQFSSAQLLEQCLTTENRKHVVDNGLDKVVNVACVCTKNSNMEHSRVGTGILEHLFKHSEGTCSDVIRLGGLDAVLFECRTSDLETLRHCASALANLSLYGGAENQEEMILRKVPMWLFPLAFHNDDNIKYYACLAIAVLVANKEIEAEVLKSGCLDLVEPFVTSHDPSAFARSNLAHAHGQSKHWLKRLVPVLSSNREEARNLAAFHFCMEAGIKREQGNTDIFREINAIEALKNVASCPNAIASKFAAQALRLIGETVPHKLSQQVPLWSVEDVQEWVKQIGFNDYIDKFNESQVDGDLLLKLNQDNLRADIGIGNGILLKRFERELQNLKRMADYSSKDTAKMHQFLSEIGTDYCTYTYAMLNAGIDKCALPHVNEDMLMTECGIHNSIHRLRILNAVKNLENSLPSSSEENMAKTLDVFVSYRRSNGSQLASLLKVHLQLRGFSVFIDVERLEAGKFDNGLLNSIRQAKNFVLVLTPDALHRCINDEDCKDWVHREIVAALNSNCNIIPIIDQQFDWPEVERLPEDMRSVAHFNGVNWIHDYQDACIDKLERFLRGEKNIDRIAAMVPGTPGSVSYQRMHSNDSDYQSGGAGAGSGAGTGGGGGGGVTGSVVDGLMVAANGSGQANHQANRYRQSPSPARQRGSTSQLSGYSRAPSKRSQILTPYRTQQAALLHKTGAGSASMQNMMPLAYLPPRRSSAAGLGHGSGSGMGSGYRSHSVDGLLDQAGSTPEQRIAAAAAKVTAGSTALTNASSTSTLQPEEEVTDAALNDSVTRRDKHTLSPPGNVQQHRKSRSLDHILSKQTLAELLPPSSELADGTQSMQNLAIPMTPQPQRRDTSSSSKSPTPERPPQPAMERVRERQSPEGVSATESEREDQPEECLRHGNQQRASASVHRGASLTSNKTSNSSLGSNFSAGGNNKTIFNRTMKKVRSLIKKP.

A disordered region spans residues 27–52 (RITGGPGSISTTSASAITAPSTMSQT). Low complexity predominate over residues 34–48 (SISTTSASAITAPST). SAM domains are found at residues 690 to 754 (WSVE…LKRM) and 760 to 828 (KDTA…NSLP). Residues 837-981 (KTLDVFVSYR…KLERFLRGEK (145 aa)) enclose the TIR domain. NAD(+) contacts are provided by residues 846-847 (RR) and Glu-876. Residue Glu-919 is part of the active site. Polar residues predominate over residues 997 to 1010 (VSYQRMHSNDSDYQ). Disordered stretches follow at residues 997–1026 (VSYQRMHSNDSDYQSGGAGAGSGAGTGGGG), 1046–1085 (GQANHQANRYRQSPSPARQRGSTSQLSGYSRAPSKRSQIL), 1121–1148 (SAAGLGHGSGSGMGSGYRSHSVDGLLDQ), 1192–1217 (NDSVTRRDKHTLSPPGNVQQHRKSRS), and 1249–1343 (IPMT…GNNK). A compositionally biased stretch (gly residues) spans 1012 to 1026 (GGAGAGSGAGTGGGG). Residues 1046–1073 (GQANHQANRYRQSPSPARQRGSTSQLSG) are compositionally biased toward polar residues. The span at 1125–1135 (LGHGSGSGMGS) shows a compositional bias: gly residues. Low complexity predominate over residues 1321-1335 (SLTSNKTSNSSLGSN).

This sequence belongs to the SARM1 family. Widely expressed in larval brains and adult brains.

It is found in the cytoplasm. The protein resides in the cell projection. Its subcellular location is the axon. The enzyme catalyses NAD(+) + H2O = ADP-D-ribose + nicotinamide + H(+). The catalysed reaction is NAD(+) = cyclic ADP-beta-D-ribose + nicotinamide + H(+). Functionally, NAD(+) hydrolase, which plays a key role in axonal degeneration following injury by regulating NAD(+) metabolism. Acts as a negative regulator of MYD88- and TRIF-dependent toll-like receptor signaling pathway by promoting Wallerian degeneration, an injury-induced form of programmed subcellular death which involves degeneration of an axon distal to the injury site. Wallerian degeneration is triggered by NAD(+) depletion: in response to injury, it is activated and catalyzes cleavage of NAD(+) into ADP-D-ribose (ADPR), cyclic ADPR (cADPR) and nicotinamide; NAD(+) cleavage promoting axon destruction. Involved in the down-regulation of the tracheal immune response to Gram-negative bacteria. This is likely by mediating Tollo signaling in the tracheal epithelium. This chain is NAD(+) hydrolase sarm1, found in Drosophila melanogaster (Fruit fly).